The following is a 554-amino-acid chain: Beta-eudesmol synthase (554 aa).

Residues Asp305, Asp309, and Glu456 each coordinate Mg(2+). Residues 305–309 (DDIYD) carry the DDXXD motif motif.

This sequence belongs to the terpene synthase family. Requires Mg(2+) as cofactor. It depends on Mn(2+) as a cofactor. As to expression, expressed in rhizomes. Detected in stems, but not in leaves.

It localises to the cytoplasm. It catalyses the reaction (2E,6E)-farnesyl diphosphate + H2O = beta-eudesmol + diphosphate. It carries out the reaction (2E,6E)-farnesyl diphosphate + H2O = 10-epi-gamma-eudesmol + diphosphate. The enzyme catalyses (2E,6E)-farnesyl diphosphate + H2O = alpha-eudesmol + diphosphate. It functions in the pathway secondary metabolite biosynthesis; terpenoid biosynthesis. Involved in the biosynthesis of beta-eudesmol, a sesquiterpene with antifungal activity and responsible for resistance of plants to ant attack. Produces mainly beta-eudesmol, but also smaller amounts of 10-epi-gamma-eudesmol, alpha-eudesmol and aristolene. This chain is Beta-eudesmol synthase (ZSS2), found in Zingiber zerumbet (Shampoo ginger).